A 470-amino-acid chain; its full sequence is ATP synthase subunit beta (470 aa).

158–165 lines the ATP pocket; it reads GGAGVGKT.

It belongs to the ATPase alpha/beta chains family. F-type ATPases have 2 components, CF(1) - the catalytic core - and CF(0) - the membrane proton channel. CF(1) has five subunits: alpha(3), beta(3), gamma(1), delta(1), epsilon(1). CF(0) has three main subunits: a(1), b(2) and c(9-12). The alpha and beta chains form an alternating ring which encloses part of the gamma chain. CF(1) is attached to CF(0) by a central stalk formed by the gamma and epsilon chains, while a peripheral stalk is formed by the delta and b chains.

Its subcellular location is the cell membrane. It catalyses the reaction ATP + H2O + 4 H(+)(in) = ADP + phosphate + 5 H(+)(out). Its function is as follows. Produces ATP from ADP in the presence of a proton gradient across the membrane. The catalytic sites are hosted primarily by the beta subunits. The protein is ATP synthase subunit beta of Shouchella clausii (strain KSM-K16) (Alkalihalobacillus clausii).